A 142-amino-acid chain; its full sequence is Putative FK506-binding protein 9-like protein (142 aa).

Residues 1-49 (MDMGLREMCVGEKRTVIIPPHLGYGEAGVDGEVPGSAVLVFDIELLELV) form the PPIase FKBP-type domain. 2 consecutive EF-hand domains span residues 60-95 (WNGE…QVAS) and 105-140 (DAEL…AKQD). Residues aspartate 118, asparagine 120, aspartate 122, lysine 124, and glutamate 129 each coordinate Ca(2+).

This is Putative FK506-binding protein 9-like protein (FKBP9P1) from Homo sapiens (Human).